We begin with the raw amino-acid sequence, 860 residues long: Endo-1,4-beta-xylanase B (860 aa).

The N-terminal stretch at 1 to 20 (MKFSSANKILFSGLVASANA) is a signal peptide. Residues 21-324 (YDLLKDYAGD…KPVYNTLLNI (304 aa)) form the GH10 domain. Catalysis depends on glutamate 144, which acts as the Proton donor. Glutamate 255 acts as the Nucleophile in catalysis. Residues cysteine 278 and cysteine 284 are joined by a disulfide bond. N-linked (GlcNAc...) asparagine glycans are attached at residues asparagine 295, asparagine 309, asparagine 359, and asparagine 374. Polar residues-rich tracts occupy residues 330 to 362 (RPAS…NKSK) and 371 to 418 (LPGN…NSKT). The disordered stretch occupies residues 330-793 (RPASSSAKTL…TKTLPGGACK (464 aa)). Copy 1 of the repeat occupies 375-382 (KSKTLPGG). Residues 375–782 (KSKTLPGGNS…GGKSKTLPGG (408 aa)) are 47 X 8 AA tandem repeats of [SKN]-S-K-T-L-P-G-G. Asparagine 390 carries N-linked (GlcNAc...) asparagine glycosylation. Repeat unit 2 spans residues 391-398 (KSKTLPGG). The N-linked (GlcNAc...) asparagine glycan is linked to asparagine 406. 45 tandem repeats follow at residues 415 to 422 (NSKTLPGG), 431 to 438 (NSKTLPGG), 439 to 446 (KSKTLPGG), 447 to 454 (NSKTLPGG), 455 to 462 (KSKTLPGG), 463 to 470 (NSKTLPGG), 471 to 478 (SSKTLPGG), 479 to 486 (KSKTLPGG), 487 to 494 (NSKTLPGG), 495 to 502 (SSKTLPGG), 503 to 510 (KSKTLPGG), 511 to 518 (SSKTLPGG), 519 to 526 (KSKTLPGG), 527 to 534 (NSKTLPGG), 535 to 542 (NSKTLPGG), 543 to 550 (SSKTLPGG), 551 to 558 (KSKTLPGG), 559 to 566 (NSKTLPGG), 567 to 574 (SSKTLPGG), 575 to 582 (KSKTLPGG), 583 to 590 (NSKTLPGG), 591 to 598 (NSKTLPGG), 599 to 606 (KSKTLPGG), 607 to 614 (NSKTLPGG), 615 to 622 (SSKTLPGG), 623 to 630 (KSKTLPGG), 631 to 638 (SSKTLPGG), 639 to 646 (KSKTLPGG), 647 to 654 (NSKTLPGG), 655 to 662 (NSKTLPGG), 663 to 670 (SSKTLPGG), 671 to 678 (KSKTLPGG), 679 to 686 (SSKTLPGG), 687 to 694 (KSKTLPGG), 695 to 702 (NSKTLPGG), 703 to 710 (KSKTLPGG), 711 to 718 (NSKTLPGG), 719 to 726 (KSKTLPGG), 727 to 734 (NSKTLPGG), 735 to 742 (KSKTLPGG), 743 to 750 (NSKTLPGG), 751 to 758 (SSKTLPGG), 759 to 766 (KSKTLPGG), 767 to 774 (NSKTLPGG), and 775 to 782 (KSKTLPGG). 2 stretches are compositionally biased toward polar residues: residues 461-474 (GGNS…SSKT) and 485-498 (GGNS…SSKT). Composition is skewed to polar residues over residues 525-546 (GGNS…SSKT), 557-570 (GGNS…SSKT), 581-594 (GGNS…NSKT), and 605-618 (GGNS…SSKT). Polar residues predominate over residues 645–666 (GGNSKTLPGGNSKTLPGGSSKT). Positions 741–754 (GGNSKTLPGGSSKT) are enriched in polar residues. The CBM1 domain maps to 824 to 860 (NCAAKWGQCGGNGFNGPTCCQNGSRCQFVNEWYSQCL). Asparagine 845 carries an N-linked (GlcNAc...) asparagine glycan.

It belongs to the glycosyl hydrolase 10 (cellulase F) family.

Its subcellular location is the secreted. It carries out the reaction Endohydrolysis of (1-&gt;4)-beta-D-xylosidic linkages in xylans.. It functions in the pathway glycan degradation; xylan degradation. Functionally, endo-1,4-beta-xylanase involved in the hydrolysis of xylan, a major structural heterogeneous polysaccharide found in plant biomass representing the second most abundant polysaccharide in the biosphere, after cellulose. Hydrolyzes both unsubstituted (oat spelts) and highly substituted (rye and wheat) forms of arabinoxylanslans. The sequence is that of Endo-1,4-beta-xylanase B (xynB) from Neocallimastix patriciarum (Rumen fungus).